The chain runs to 92 residues: Small ribosomal subunit protein bS20 (92 aa).

The disordered stretch occupies residues 1–22 (MANSPQSKKRARQAEARAAVNK).

The protein belongs to the bacterial ribosomal protein bS20 family.

Its function is as follows. Binds directly to 16S ribosomal RNA. This chain is Small ribosomal subunit protein bS20, found in Cereibacter sphaeroides (strain ATCC 17029 / ATH 2.4.9) (Rhodobacter sphaeroides).